Consider the following 370-residue polypeptide: Phospho-N-acetylmuramoyl-pentapeptide-transferase (370 aa).

Helical transmembrane passes span 31–51 (LTSMFVTFWLGHKVIDFLYGL), 73–93 (TMGGLLIIGSLLLSVLLWGNL), 98–118 (IIVLSVFALCFSALGFADDYM), 135–155 (LLSILISLVFCILFFYYTGVI), 177–197 (GPVLALGVFAIPFSILVIIGS), 209–229 (GLATGTVAISVVTLGIIAYVS), 251–271 (VFLSALAGALFGFLWFNAHPA), 273–293 (VFMGDTGSLFLGATLGMIVIL), 298–318 (ILLLILGAIFVSEALSVILQV), and 347–367 (KIVIRFWIIAVILAIISLSTL).

It belongs to the glycosyltransferase 4 family. MraY subfamily. Requires Mg(2+) as cofactor.

It is found in the cell inner membrane. The enzyme catalyses UDP-N-acetyl-alpha-D-muramoyl-L-alanyl-gamma-D-glutamyl-meso-2,6-diaminopimeloyl-D-alanyl-D-alanine + di-trans,octa-cis-undecaprenyl phosphate = di-trans,octa-cis-undecaprenyl diphospho-N-acetyl-alpha-D-muramoyl-L-alanyl-D-glutamyl-meso-2,6-diaminopimeloyl-D-alanyl-D-alanine + UMP. Its pathway is cell wall biogenesis; peptidoglycan biosynthesis. Functionally, catalyzes the initial step of the lipid cycle reactions in the biosynthesis of the cell wall peptidoglycan: transfers peptidoglycan precursor phospho-MurNAc-pentapeptide from UDP-MurNAc-pentapeptide onto the lipid carrier undecaprenyl phosphate, yielding undecaprenyl-pyrophosphoryl-MurNAc-pentapeptide, known as lipid I. The polypeptide is Phospho-N-acetylmuramoyl-pentapeptide-transferase (Leptospira borgpetersenii serovar Hardjo-bovis (strain JB197)).